The primary structure comprises 943 residues: Isoleucine--tRNA ligase (943 aa).

A 'HIGH' region motif is present at residues 59 to 69 (PYANGQIHLGH). Position 577 (E577) interacts with L-isoleucyl-5'-AMP. The 'KMSKS' region signature appears at 618 to 622 (KMSKS). K621 is a binding site for ATP. Residues C906, C909, C926, and C929 each coordinate Zn(2+).

Belongs to the class-I aminoacyl-tRNA synthetase family. IleS type 1 subfamily. Monomer. Zn(2+) serves as cofactor.

The protein resides in the cytoplasm. The enzyme catalyses tRNA(Ile) + L-isoleucine + ATP = L-isoleucyl-tRNA(Ile) + AMP + diphosphate. Catalyzes the attachment of isoleucine to tRNA(Ile). As IleRS can inadvertently accommodate and process structurally similar amino acids such as valine, to avoid such errors it has two additional distinct tRNA(Ile)-dependent editing activities. One activity is designated as 'pretransfer' editing and involves the hydrolysis of activated Val-AMP. The other activity is designated 'posttransfer' editing and involves deacylation of mischarged Val-tRNA(Ile). The polypeptide is Isoleucine--tRNA ligase (Xylella fastidiosa (strain M12)).